The primary structure comprises 1384 residues: Sterol 3-beta-glucosyltransferase (1384 aa).

Disordered regions lie at residues Met-1–Leu-64, Ala-86–Ala-189, and Asp-204–Ala-229. Positions Leu-7–Leu-19 are enriched in basic and acidic residues. Residues Ala-21 to Phe-36 are compositionally biased toward low complexity. Residues Asp-38–Gln-47 are compositionally biased toward basic and acidic residues. The segment covering Leu-146–Ser-156 has biased composition (low complexity). Residues Gly-158–Glu-172 are compositionally biased toward polar residues. The segment covering Ser-174–Ala-189 has biased composition (low complexity). Residues Ala-209–Ala-229 are compositionally biased toward polar residues. In terms of domain architecture, GRAM 1 spans Lys-237 to Ala-284. Residues Val-285–Phe-384 form the PH domain. 2 disordered regions span residues Met-457–Asp-526 and Asn-560–Ser-629. 3 stretches are compositionally biased toward polar residues: residues Lys-458 to Ala-473, Trp-483 to Gly-494, and Asn-560 to Thr-572. Residues Pro-578 to Ser-588 are compositionally biased toward basic and acidic residues. Positions Arg-604–Ser-629 are enriched in polar residues. Positions Arg-714–Gln-817 constitute a GRAM 2 domain. Residues Ser-901, Arg-902, Asp-904, Ala-1204, His-1206, His-1219, Gly-1223, Thr-1224, Asp-1243, and Gln-1244 each contribute to the UDP-alpha-D-glucose site. Positions Val-1322–Thr-1336 are enriched in polar residues. The tract at residues Val-1322–Trp-1350 is disordered. Positions Glu-1338–Trp-1350 are enriched in acidic residues.

This sequence belongs to the glycosyltransferase 28 family.

It localises to the cytoplasm. It is found in the preautophagosomal structure membrane. It catalyses the reaction a sterol + UDP-alpha-D-glucose = a sterol 3-beta-D-glucoside + UDP + H(+). The enzyme catalyses ergosterol + UDP-alpha-D-glucose = ergosteryl 3-beta-D-glucoside + UDP + H(+). In terms of biological role, sterol glycosyltransferase responsible for the glycosylation of ergosterol to form ergosterol-glucoside. Involved in cytoplasm to vacuole transport (Cvt), pexophagy or nonselective autophagy. The protein is Sterol 3-beta-glucosyltransferase of Aspergillus oryzae (strain ATCC 42149 / RIB 40) (Yellow koji mold).